The primary structure comprises 369 residues: Uroporphyrinogen decarboxylase (369 aa).

Arginine 39, alanine 41, arginine 43, arginine 52, aspartate 88, tyrosine 166, serine 221, and histidine 341 together coordinate coproporphyrinogen I. Residues arginine 39, alanine 41, and arginine 43 each contribute to the coproporphyrinogen III site. Coproporphyrinogen III contacts are provided by aspartate 88, tyrosine 166, serine 221, and histidine 341.

The protein belongs to the uroporphyrinogen decarboxylase family. Homodimer.

The protein resides in the cytoplasm. Its subcellular location is the cytosol. The catalysed reaction is uroporphyrinogen III + 4 H(+) = coproporphyrinogen III + 4 CO2. The enzyme catalyses uroporphyrinogen I + 4 H(+) = coproporphyrinogen I + 4 CO2. The protein operates within porphyrin-containing compound metabolism; protoporphyrin-IX biosynthesis; coproporphyrinogen-III from 5-aminolevulinate: step 4/4. Catalyzes the sequential decarboxylation of the four acetate side chains of uroporphyrinogen to form coproporphyrinogen and participates in the fifth step in the heme biosynthetic pathway. Isomer I or isomer III of uroporphyrinogen may serve as substrate, but only coproporphyrinogen III can ultimately be converted to heme. In vitro also decarboxylates pentacarboxylate porphyrinogen I. The chain is Uroporphyrinogen decarboxylase from Danio rerio (Zebrafish).